We begin with the raw amino-acid sequence, 378 residues long: Alanine racemase (378 aa).

The Proton acceptor; specific for D-alanine role is filled by K35. An N6-(pyridoxal phosphate)lysine modification is found at K35. R133 contributes to the substrate binding site. Y266 acts as the Proton acceptor; specific for L-alanine in catalysis. M314 contributes to the substrate binding site.

This sequence belongs to the alanine racemase family. Pyridoxal 5'-phosphate serves as cofactor.

The catalysed reaction is L-alanine = D-alanine. Its pathway is amino-acid biosynthesis; D-alanine biosynthesis; D-alanine from L-alanine: step 1/1. In terms of biological role, catalyzes the interconversion of L-alanine and D-alanine. May also act on other amino acids. This is Alanine racemase (alr) from Beutenbergia cavernae (strain ATCC BAA-8 / DSM 12333 / CCUG 43141 / JCM 11478 / NBRC 16432 / NCIMB 13614 / HKI 0122).